Reading from the N-terminus, the 240-residue chain is UDP-2,3-diacylglucosamine hydrolase (240 aa).

Mn(2+)-binding residues include aspartate 8, histidine 10, aspartate 41, asparagine 79, and histidine 114. 79–80 (NR) contributes to the substrate binding site. The substrate site is built by aspartate 122, serine 160, asparagine 164, lysine 167, and histidine 195. Mn(2+)-binding residues include histidine 195 and histidine 197.

This sequence belongs to the LpxH family. Requires Mn(2+) as cofactor.

It is found in the cell inner membrane. The catalysed reaction is UDP-2-N,3-O-bis[(3R)-3-hydroxytetradecanoyl]-alpha-D-glucosamine + H2O = 2-N,3-O-bis[(3R)-3-hydroxytetradecanoyl]-alpha-D-glucosaminyl 1-phosphate + UMP + 2 H(+). It functions in the pathway glycolipid biosynthesis; lipid IV(A) biosynthesis; lipid IV(A) from (3R)-3-hydroxytetradecanoyl-[acyl-carrier-protein] and UDP-N-acetyl-alpha-D-glucosamine: step 4/6. Functionally, hydrolyzes the pyrophosphate bond of UDP-2,3-diacylglucosamine to yield 2,3-diacylglucosamine 1-phosphate (lipid X) and UMP by catalyzing the attack of water at the alpha-P atom. Involved in the biosynthesis of lipid A, a phosphorylated glycolipid that anchors the lipopolysaccharide to the outer membrane of the cell. In Shigella sonnei (strain Ss046), this protein is UDP-2,3-diacylglucosamine hydrolase.